A 607-amino-acid polypeptide reads, in one-letter code: uncharacterized protein (607 aa).

This is an uncharacterized protein from Ictalurid herpesvirus 1 (strain Auburn) (IcHV-1).